A 345-amino-acid chain; its full sequence is Phosphoribosylformylglycinamidine cyclo-ligase (345 aa).

Belongs to the AIR synthase family.

It localises to the cytoplasm. It catalyses the reaction 2-formamido-N(1)-(5-O-phospho-beta-D-ribosyl)acetamidine + ATP = 5-amino-1-(5-phospho-beta-D-ribosyl)imidazole + ADP + phosphate + H(+). It functions in the pathway purine metabolism; IMP biosynthesis via de novo pathway; 5-amino-1-(5-phospho-D-ribosyl)imidazole from N(2)-formyl-N(1)-(5-phospho-D-ribosyl)glycinamide: step 2/2. This chain is Phosphoribosylformylglycinamidine cyclo-ligase, found in Lactobacillus acidophilus (strain ATCC 700396 / NCK56 / N2 / NCFM).